We begin with the raw amino-acid sequence, 369 residues long: 4-hydroxy-3-methylbut-2-en-1-yl diphosphate synthase (flavodoxin) (369 aa).

Residues cysteine 270, cysteine 273, cysteine 305, and glutamate 312 each coordinate [4Fe-4S] cluster.

The protein belongs to the IspG family. Requires [4Fe-4S] cluster as cofactor.

The enzyme catalyses (2E)-4-hydroxy-3-methylbut-2-enyl diphosphate + oxidized [flavodoxin] + H2O + 2 H(+) = 2-C-methyl-D-erythritol 2,4-cyclic diphosphate + reduced [flavodoxin]. The protein operates within isoprenoid biosynthesis; isopentenyl diphosphate biosynthesis via DXP pathway; isopentenyl diphosphate from 1-deoxy-D-xylulose 5-phosphate: step 5/6. Functionally, converts 2C-methyl-D-erythritol 2,4-cyclodiphosphate (ME-2,4cPP) into 1-hydroxy-2-methyl-2-(E)-butenyl 4-diphosphate. The polypeptide is 4-hydroxy-3-methylbut-2-en-1-yl diphosphate synthase (flavodoxin) (Pseudomonas putida (strain ATCC 700007 / DSM 6899 / JCM 31910 / BCRC 17059 / LMG 24140 / F1)).